Consider the following 476-residue polypeptide: E1B 55 kDa protein (476 aa).

2 disordered regions span residues 1-20 (MERP…GNGS) and 42-95 (FGSS…KMEN). A phosphoserine mark is found at Ser472 and Ser473.

This sequence belongs to the adenoviridae E1B 55 kDa protein family. As to quaternary structure, interacts with host PML-4 and PML-5; this interaction promotes efficient subnuclear targeting of E1B-55K to PML nuclear bodies. Interacts with E4-ORF3 protein. Interacts with E4-ORF6 protein.

The protein localises to the host nucleus. It is found in the host cytoplasm. Its function is as follows. Plays a major role to prevent cellular inhibition of viral genome replication. Assembles an SCF-like E3 ubiquitin ligase complex based on the cellular proteins ELOB, ELOC, CUL5 and RBX1, in cooperation with viral E4orf6. This viral RING-type ligase ubiquitinates cellular substrates and targets them to proteasomal degradation: TP53/p53, LIG4, MRE11-RAD50-NBS1 (MRN) complex, ITGA3, DAXX and BLM. E1B-55K probably acts as the substrate-specific adapter of the SCF-like E3 ubiquitin ligase complex. Degradation of host TP53/p53 activity is essential for preventing E1A-induced TP53 accumulation that would otherwise lead to cell apoptosis and growth arrest. E1B-55K also inactivates TP53 transcription-factor activity by binding its transactivation domain. E1B-55K also functions as a SUMO1 E3 ligase for TP53 which causes the latter to be sequestered in promyelocytic leukemia (PML) nuclear bodies thereby contributing to maximal inhibition of TP53 function. The polypeptide is E1B 55 kDa protein (Human adenovirus F serotype 40 (HAdV-40)).